The following is a 344-amino-acid chain: Uroporphyrinogen decarboxylase (344 aa).

Residues 25–29, aspartate 75, tyrosine 152, serine 207, and histidine 323 each bind substrate; that span reads RQAGR.

Belongs to the uroporphyrinogen decarboxylase family. Homodimer.

The protein resides in the cytoplasm. The catalysed reaction is uroporphyrinogen III + 4 H(+) = coproporphyrinogen III + 4 CO2. The protein operates within porphyrin-containing compound metabolism; protoporphyrin-IX biosynthesis; coproporphyrinogen-III from 5-aminolevulinate: step 4/4. Its function is as follows. Catalyzes the decarboxylation of four acetate groups of uroporphyrinogen-III to yield coproporphyrinogen-III. This Ruegeria pomeroyi (strain ATCC 700808 / DSM 15171 / DSS-3) (Silicibacter pomeroyi) protein is Uroporphyrinogen decarboxylase.